The chain runs to 122 residues: Large ribosomal subunit protein uL14c (122 aa).

Belongs to the universal ribosomal protein uL14 family. In terms of assembly, part of the 50S ribosomal subunit.

Its subcellular location is the plastid. It is found in the chloroplast. Its function is as follows. Binds to 23S rRNA. The chain is Large ribosomal subunit protein uL14c from Marchantia polymorpha (Common liverwort).